A 242-amino-acid chain; its full sequence is ATP-dependent dethiobiotin synthetase BioD 1 (242 aa).

Residue Asn-12 to Thr-17 participates in ATP binding. Thr-16 contributes to the Mg(2+) binding site. Lys-37 is an active-site residue. Asp-66 contacts ATP. The Mg(2+) site is built by Asp-66 and Glu-124. ATP contacts are provided by residues Asn-184–Arg-185, Pro-213–Leu-215, and Glu-220.

The protein belongs to the dethiobiotin synthetase family. As to quaternary structure, homodimer. It depends on Mg(2+) as a cofactor.

The protein resides in the cytoplasm. It carries out the reaction (7R,8S)-7,8-diammoniononanoate + CO2 + ATP = (4R,5S)-dethiobiotin + ADP + phosphate + 3 H(+). Its pathway is cofactor biosynthesis; biotin biosynthesis; biotin from 7,8-diaminononanoate: step 1/2. Functionally, catalyzes a mechanistically unusual reaction, the ATP-dependent insertion of CO2 between the N7 and N8 nitrogen atoms of 7,8-diaminopelargonic acid (DAPA, also called 7,8-diammoniononanoate) to form a ureido ring. This Haemophilus influenzae (strain ATCC 51907 / DSM 11121 / KW20 / Rd) protein is ATP-dependent dethiobiotin synthetase BioD 1.